Here is a 392-residue protein sequence, read N- to C-terminus: Bifunctional enzyme Fae/Hps (392 aa).

Residues 1 to 161 (MFQIGEALMG…EESNKSTHAI (161 aa)) form a formaldehyde-activating enzyme region. His-17 acts as the Proton donor in catalysis. Asp-19, Leu-48, Lys-66, Thr-68, and Gln-83 together coordinate substrate. The interval 162 to 392 (MGFKVTRLWD…IDQFRVMTDF (231 aa)) is 3-hexulose-6-phosphate synthase.

This sequence in the N-terminal section; belongs to the formaldehyde-activating enzyme family. It in the C-terminal section; belongs to the HPS/KGPDC family. HPS subfamily.

The enzyme catalyses 5,6,7,8-tetrahydromethanopterin + formaldehyde = 5,10-methylenetetrahydromethanopterin + H2O. It catalyses the reaction D-ribulose 5-phosphate + formaldehyde = D-arabino-hex-3-ulose 6-phosphate. Its pathway is carbohydrate biosynthesis; D-ribose 5-phosphate biosynthesis. Its function is as follows. Catalyzes the condensation of formaldehyde with tetrahydromethanopterin (H(4)MPT) to 5,10-methylenetetrahydromethanopterin. In terms of biological role, catalyzes the reversible formation of ribulose-5-phosphate and formaldehyde from 3-hexulose-6-phosphate. The polypeptide is Bifunctional enzyme Fae/Hps (Methanosarcina barkeri (strain Fusaro / DSM 804)).